The primary structure comprises 291 residues: uncharacterized protein (291 aa).

Transmembrane regions (helical) follow at residues 13-33, 40-60, 81-101, 128-148, 158-178, and 220-240; these read FDLF…MEMG, LGTV…LGFL, GFLN…LICI, FGLF…RLLL, VILG…YLEY, and GNVW…ILLA. N-linked (GlcNAc...) asparagine glycosylation occurs at asparagine 249. Residues 269 to 291 form a disordered region; the sequence is MASEDPPKDPLPRQEGGGGDTIA.

The protein localises to the membrane. This is an uncharacterized protein from Encephalitozoon cuniculi (strain GB-M1) (Microsporidian parasite).